Reading from the N-terminus, the 145-residue chain is Alpha-amylase/trypsin inhibitor CMa (145 aa).

Positions 1–25 (MASKSSITPLLLAAVLASVFAAATA) are cleaved as a signal peptide.

This sequence belongs to the protease inhibitor I6 (cereal trypsin/alpha-amylase inhibitor) family. In terms of assembly, heterotetramer of one CMa, one CMb and two CMd chains. Post-translationally, five disulfide bonds, which are essential for the inhibitor activity, are probably present. As to expression, endosperm.

The protein resides in the secreted. Its function is as follows. Alpha-amylase/trypsin inhibitor. It could be involved in insect defense mechanisms. The polypeptide is Alpha-amylase/trypsin inhibitor CMa (IAT1) (Hordeum vulgare (Barley)).